A 233-amino-acid chain; its full sequence is Octanoyltransferase (233 aa).

Residues D36–T211 enclose the BPL/LPL catalytic domain. Residues R75–H82, S142–G144, and G155–A157 contribute to the substrate site. The Acyl-thioester intermediate role is filled by C173.

This sequence belongs to the LipB family.

It localises to the cytoplasm. It catalyses the reaction octanoyl-[ACP] + L-lysyl-[protein] = N(6)-octanoyl-L-lysyl-[protein] + holo-[ACP] + H(+). It participates in protein modification; protein lipoylation via endogenous pathway; protein N(6)-(lipoyl)lysine from octanoyl-[acyl-carrier-protein]: step 1/2. Catalyzes the transfer of endogenously produced octanoic acid from octanoyl-acyl-carrier-protein onto the lipoyl domains of lipoate-dependent enzymes. Lipoyl-ACP can also act as a substrate although octanoyl-ACP is likely to be the physiological substrate. The chain is Octanoyltransferase from Yersinia pestis bv. Antiqua (strain Antiqua).